The sequence spans 71 residues: uncharacterized protein (71 aa).

Residues 12 to 32 traverse the membrane as a helical segment; it reads FLVSIAFFGLAPTIPLLAIAL.

It is found in the membrane. This is an uncharacterized protein from Sinorhizobium fredii (strain NBRC 101917 / NGR234).